The sequence spans 146 residues: Transcriptional regulator MraZ (146 aa).

2 SpoVT-AbrB domains span residues 5-52 and 81-124; these read SAAL…PRAE and AAEI…KEES.

The protein belongs to the MraZ family. In terms of assembly, forms oligomers.

The protein resides in the cytoplasm. Its subcellular location is the nucleoid. The sequence is that of Transcriptional regulator MraZ from Alcanivorax borkumensis (strain ATCC 700651 / DSM 11573 / NCIMB 13689 / SK2).